We begin with the raw amino-acid sequence, 422 residues long: DNA-binding transcriptional activator AdeR (422 aa).

The protein belongs to the CdaR family.

Functionally, activates ald expression in response to alanine availability and is important for normal sporulation in B.subtilis. In Bacillus subtilis (strain 168), this protein is DNA-binding transcriptional activator AdeR.